The chain runs to 597 residues: Aspartate--tRNA ligase (597 aa).

Glu-180 is a binding site for L-aspartate. Residues 204–207 (QLFK) form an aspartate region. Position 226 (Arg-226) interacts with L-aspartate. Residues 226–228 (RDE) and Gln-235 each bind ATP. His-454 provides a ligand contact to L-aspartate. Glu-488 contributes to the ATP binding site. An L-aspartate-binding site is contributed by Arg-495. An ATP-binding site is contributed by 540–543 (GLDR).

The protein belongs to the class-II aminoacyl-tRNA synthetase family. Type 1 subfamily. In terms of assembly, homodimer.

It localises to the cytoplasm. The catalysed reaction is tRNA(Asp) + L-aspartate + ATP = L-aspartyl-tRNA(Asp) + AMP + diphosphate. Functionally, catalyzes the attachment of L-aspartate to tRNA(Asp) in a two-step reaction: L-aspartate is first activated by ATP to form Asp-AMP and then transferred to the acceptor end of tRNA(Asp). The protein is Aspartate--tRNA ligase of Clostridium perfringens (strain ATCC 13124 / DSM 756 / JCM 1290 / NCIMB 6125 / NCTC 8237 / Type A).